We begin with the raw amino-acid sequence, 430 residues long: Target of rapamycin complex 1 subunit toc1 (430 aa).

S204 and S399 each carry phosphoserine.

In terms of assembly, the target of rapamycin complex 1 (TORC1) is composed of at least mip1, pop3/wat1, tco89, toc1 and tor2.

It localises to the cytoplasm. Component of TORC1, which regulates multiple cellular processes to control cell growth in response to environmental signals. Tor2 is essential for growth. Nutrient limitation and environmental stress signals cause inactivation of TORC1. Active TORC1 positively controls cell growth and ribosome biogenesis by regulating ribosomal protein gene expression. TORC1 negatively controls G1 cell-cycle arrest, sexual development and amino acid uptake. Represses mating, meiosis and sporulation efficiency by interfering with the functions of the transcription factor ste11 and the meiosis-promoting RNA-binding protein mei2. This is Target of rapamycin complex 1 subunit toc1 from Schizosaccharomyces pombe (strain 972 / ATCC 24843) (Fission yeast).